Reading from the N-terminus, the 1529-residue chain is ATP-dependent permease PDR15 (1529 aa).

The segment covering 1 to 13 (MSSDIRDVEERNS) has biased composition (basic and acidic residues). The segment at 1–38 (MSSDIRDVEERNSRSSSSSSSSNSAAQSIGQHPYRGFD) is disordered. The Cytoplasmic segment spans residues 1-531 (MSSDIRDVEE…NFWRMKQSAS (531 aa)). Positions 14–24 (RSSSSSSSSNS) are enriched in low complexity. The 250-residue stretch at 171–420 (LRLLKPSKEE…FQDMGYYCPP (250 aa)) folds into the ABC transporter 1 domain. The helical transmembrane segment at 532-552 (VTLWQVIGNSVMAFILGSMFY) threads the bilayer. Residues 553–567 (KVMKKNDTSTFYFRG) are Extracellular-facing. N558 is a glycosylation site (N-linked (GlcNAc...) asparagine). A helical transmembrane segment spans residues 568–588 (AAMFFAILFNAFSCLLEIFSL). Residues 589-617 (YETRPITEKHRTYSLYHPSADAFASVLSE) are Cytoplasmic-facing. The chain crosses the membrane as a helical span at residues 618 to 638 (MPPKLITAVCFNIIFYFLVDF). Residues 639-642 (RRNG) lie on the Extracellular side of the membrane. A helical membrane pass occupies residues 643–663 (GVFFFYFLINVIATFTLSHLF). The Cytoplasmic segment spans residues 664-699 (RCVGSLTKTLQEAMVPASMLLLAISMYTGFAIPKTK). Residues 700 to 720 (ILGWSIWIWYINPLAYLFESL) traverse the membrane as a helical segment. Residues 721–783 (MINEFHDRRF…YDYEHKHKWR (63 aa)) lie on the Extracellular side of the membrane. The N-linked (GlcNAc...) asparagine glycan is linked to N744. Residues 784-804 (GFGIGMAYVVFFFFVYLILCE) traverse the membrane as a helical segment. At 805 to 1219 (YNEGAKQKGE…LFQQYWRSPD (415 aa)) the chain is on the cytoplasmic side. Positions 829-840 (EGKLQEKHRPGD) are enriched in basic and acidic residues. Residues 829–873 (EGKLQEKHRPGDIENNAGSSPDSATTEKKILDDSSEGSDSSSDNA) are disordered. Residues 884-1127 (FHWRDLCYDV…MIDYFESKGA (244 aa)) form the ABC transporter 2 domain. Position 920–927 (920–927 (GASGAGKT)) interacts with ATP. Residues 1220–1240 (YLWSKFILTIFNQVFIGFTFF) form a helical membrane-spanning segment. The Extracellular portion of the chain corresponds to 1241–1312 (KADRSLQGLQ…VEIPWNILAG (72 aa)). The chain crosses the membrane as a helical span at residues 1313–1333 (TIAYCIYYYAVGFYANASAAG). Residues 1334–1340 (QLHERGA) lie on the Cytoplasmic side of the membrane. Residues 1341–1361 (LFWLFSIAFYVYIGSMGLLMI) form a helical membrane-spanning segment. Over 1362-1368 (SFNEVAE) the chain is Extracellular. A helical membrane pass occupies residues 1369-1389 (TAAHMGTLLFTMALSFCGVMA). Topologically, residues 1390–1396 (TPKVMPR) are cytoplasmic. Residues 1397-1417 (FWIFMYRVSPLTYMIDALLAL) form a helical membrane-spanning segment. Topologically, residues 1418-1492 (GVANVDVKCS…SSHYYRRWRN (75 aa)) are extracellular. The helical transmembrane segment at 1493–1513 (YGIFICYIAFDYIAATFLYWL) threads the bilayer. Topologically, residues 1514-1529 (SRVPKKNGKISEKPKK) are cytoplasmic.

It belongs to the ABC transporter superfamily. ABCG family. PDR (TC 3.A.1.205) subfamily.

It localises to the membrane. The protein is ATP-dependent permease PDR15 (PDR15) of Saccharomyces cerevisiae (strain ATCC 204508 / S288c) (Baker's yeast).